The chain runs to 363 residues: Putative F-box protein At4g22170 (363 aa).

The F-box domain occupies 7–58 (PNSWSDLPHDLLNLVFERLSFANFNRARSVCSSWYSASRQSVPKNQIHWLIL).

This is Putative F-box protein At4g22170 from Arabidopsis thaliana (Mouse-ear cress).